The primary structure comprises 230 residues: uncharacterized protein (230 aa).

A helical transmembrane segment spans residues 93–115 (VFLYYFLIVYTSGNVDLISRFLF).

It belongs to the DUP/COS family.

It is found in the membrane. This is an uncharacterized protein from Saccharomyces cerevisiae (strain ATCC 204508 / S288c) (Baker's yeast).